Consider the following 706-residue polypeptide: Serotransferrin (706 aa).

Positions 1-19 are cleaved as a signal peptide; that stretch reads MRLAIRALLACAVLGLCLA. 2 Transferrin-like domains span residues 23 to 349 and 363 to 691; these read VRWC…NLRE and VKWC…NLRQ. Cystine bridges form between C26–C64 and C36–C55. A Dimethylated arginine modification is found at R40. The Fe(3+) site is built by D79 and Y111. Cystine bridges form between C134/C215, C174/C190, C177/C198, C187/C200, and C248/C262. Hydrogencarbonate is bound by residues T136, R140, A142, and G143. Y209 is a binding site for Fe(3+). Residue H270 participates in Fe(3+) binding. 11 cysteine pairs are disulfide-bonded: C360-C623, C366-C398, C376-C389, C423-C701, C441-C664, C474-C550, C498-C692, C508-C522, C519-C533, C590-C604, and C642-C647. A Phosphoserine modification is found at S391. 2 residues coordinate Fe(3+): D413 and Y449. Hydrogencarbonate contacts are provided by T476, R480, A482, and G483. An N-linked (GlcNAc...) asparagine glycan is attached at N515. Y544 is a Fe(3+) binding site. Position 612 (H612) interacts with Fe(3+). Phosphoserine is present on S693.

Belongs to the transferrin family. As to quaternary structure, monomer. Part of a complex composed of SLC40A1/ferroportin, TF/transferrin and HEPH/hephaestin that transfers iron from cells to transferrin. Expressed by the liver and secreted in plasma.

It is found in the secreted. Its function is as follows. Transferrins are iron binding transport proteins which can bind two Fe(3+) ions in association with the binding of an anion, usually bicarbonate. It is responsible for the transport of iron from sites of absorption and heme degradation to those of storage and utilization. Serum transferrin may also have a further role in stimulating cell proliferation. The sequence is that of Serotransferrin (TF) from Equus caballus (Horse).